A 139-amino-acid chain; its full sequence is Proline-rich protein 13 (139 aa).

The segment at Met-1 to Asp-139 is disordered. Pro residues-rich tracts occupy residues Ala-24–Gly-62 and Gly-70–Pro-91. Residues Lys-103–His-124 show a composition bias toward basic residues. The span at Ser-125 to Asp-139 shows a compositional bias: low complexity.

It localises to the nucleus. Functionally, negatively regulates TSP1 expression at the level of transcription. This down-regulation was shown to reduce taxane-induced apoptosis. The chain is Proline-rich protein 13 (Prr13) from Rattus norvegicus (Rat).